The following is a 1066-amino-acid chain: Beta-galactosidase (1066 aa).

The substrate site is built by Asn110 and Asp209. Asp209 serves as a coordination point for Na(+). Residues Glu432, His434, and Glu477 each contribute to the Mg(2+) site. Substrate-binding positions include Glu477 and 553-556 (EYAH). The active-site Proton donor is the Glu477. The active-site Nucleophile is Glu553. Asn613 lines the Mg(2+) pocket. Phe617 and Asn620 together coordinate Na(+). Positions 620 and 1041 each coordinate substrate.

The protein belongs to the glycosyl hydrolase 2 family. Homotetramer. It depends on Mg(2+) as a cofactor. Na(+) serves as cofactor.

The catalysed reaction is Hydrolysis of terminal non-reducing beta-D-galactose residues in beta-D-galactosides.. The polypeptide is Beta-galactosidase (Yersinia pseudotuberculosis serotype IB (strain PB1/+)).